The primary structure comprises 502 residues: ATP synthase subunit alpha (502 aa).

The tract at residues 115-136 (VDGLGPIHTTKTRPIESPAPGV) is disordered. Residue 169–176 (GDRQTGKT) coordinates ATP.

It belongs to the ATPase alpha/beta chains family. As to quaternary structure, F-type ATPases have 2 components, CF(1) - the catalytic core - and CF(0) - the membrane proton channel. CF(1) has five subunits: alpha(3), beta(3), gamma(1), delta(1), epsilon(1). CF(0) has three main subunits: a(1), b(2) and c(9-12). The alpha and beta chains form an alternating ring which encloses part of the gamma chain. CF(1) is attached to CF(0) by a central stalk formed by the gamma and epsilon chains, while a peripheral stalk is formed by the delta and b chains.

The protein localises to the cell membrane. It carries out the reaction ATP + H2O + 4 H(+)(in) = ADP + phosphate + 5 H(+)(out). Produces ATP from ADP in the presence of a proton gradient across the membrane. The alpha chain is a regulatory subunit. In Bacillus cytotoxicus (strain DSM 22905 / CIP 110041 / 391-98 / NVH 391-98), this protein is ATP synthase subunit alpha.